Reading from the N-terminus, the 699-residue chain is SPS-sensor serine protease component SSY5 (699 aa).

2 disordered regions span residues 1–113 (MVRF…LQGF) and 129–158 (VKEE…GNAR). Residues 1-381 (MVRFFGLNKE…YCVKDYIKKA (381 aa)) constitute a propeptide that is removed on maturation. Residues 8-18 (NKEKNEEKENT) are compositionally biased toward basic and acidic residues. Over residues 24 to 38 (NEQNAAETSSSNVSG) the composition is skewed to polar residues. The segment covering 39-51 (NEERIDPNSRDTN) has biased composition (basic and acidic residues). The segment covering 61–78 (STTFGSSIQSSSIFSRGR) has biased composition (low complexity). The segment covering 83–93 (TGASSSMATSE) has biased composition (polar residues). The span at 144–154 (SSSTSSTLATS) shows a compositional bias: low complexity. The tract at residues 459–699 (FAITCAHVVL…QWDIDPQLDG (241 aa)) is serine protease. Residues His465, Asp545, and Ser640 each act as charge relay system in the active site.

It belongs to the peptidase S64 family. Component of the plasma membrane SPS (SSY1-PTR3-SSY5) amino acid sensor complex. In terms of processing, the propeptide is autoproteolytically cleaved from the catalytic domain but remains associated, forming an inactive protease complex. This processing occurs even in the absence of signaling.

The protein resides in the cell membrane. Functionally, protease component of the SPS-sensor system, which regulates the expression of several amino acid-metabolizing enzymes and amino acid- and peptide-permeases in response to extracellular amino acid levels by controlling the activity of two transcription factors, STP1 and STP2. Catalyzes the activation of these transcription factors, which are synthesized as latent cytoplasmic precursors, by proteolytic removal of an N-terminal inhibitory domain containing cytoplasmic retention motifs. SSY5 binds as an inactive protease complex to STP1. In response to extracellular amino acids and dependent on the other SPS-sensor components, the inhibitory propeptide is induced to dissociate, and thereby enables the catalytic domain to process STP1. The sequence is that of SPS-sensor serine protease component SSY5 (SSY5) from Saccharomyces cerevisiae (strain AWRI1631) (Baker's yeast).